Here is a 974-residue protein sequence, read N- to C-terminus: Glycine dehydrogenase (decarboxylating) (974 aa).

N6-(pyridoxal phosphate)lysine is present on Lys-720.

This sequence belongs to the GcvP family. In terms of assembly, the glycine cleavage system is composed of four proteins: P, T, L and H. Pyridoxal 5'-phosphate is required as a cofactor.

The catalysed reaction is N(6)-[(R)-lipoyl]-L-lysyl-[glycine-cleavage complex H protein] + glycine + H(+) = N(6)-[(R)-S(8)-aminomethyldihydrolipoyl]-L-lysyl-[glycine-cleavage complex H protein] + CO2. Functionally, the glycine cleavage system catalyzes the degradation of glycine. The P protein binds the alpha-amino group of glycine through its pyridoxal phosphate cofactor; CO(2) is released and the remaining methylamine moiety is then transferred to the lipoamide cofactor of the H protein. The polypeptide is Glycine dehydrogenase (decarboxylating) (Cupriavidus metallidurans (strain ATCC 43123 / DSM 2839 / NBRC 102507 / CH34) (Ralstonia metallidurans)).